Here is a 67-residue protein sequence, read N- to C-terminus: Kappa-conotoxin-like 2 (67 aa).

Positions 1-26 (MMFRLTSVSCFLLVIACLNLFQVVLT) are cleaved as a signal peptide. Disulfide bonds link Cys29-Cys43, Cys36-Cys48, Cys42-Cys51, and Cys47-Cys55. Phe59 bears the Phenylalanine amide mark. The propeptide occupies 63–67 (ATFQE).

It belongs to the conotoxin I2 superfamily. Expressed by the venom duct.

It localises to the secreted. Functionally, inhibits the vertebrate voltage-gated potassium channels Kv1.1/KCNA1 and Kv1.3/KCNA3. This is Kappa-conotoxin-like 2 from Conus vexillum (Flag cone).